The primary structure comprises 133 residues: Phosphoribosyl-AMP cyclohydrolase (133 aa).

Residue Asp-77 coordinates Mg(2+). Cys-78 contributes to the Zn(2+) binding site. The Mg(2+) site is built by Asp-79 and Asp-81. Residues Cys-95 and Cys-102 each contribute to the Zn(2+) site.

It belongs to the PRA-CH family. In terms of assembly, homodimer. The cofactor is Mg(2+). Zn(2+) is required as a cofactor.

The protein localises to the cytoplasm. The enzyme catalyses 1-(5-phospho-beta-D-ribosyl)-5'-AMP + H2O = 1-(5-phospho-beta-D-ribosyl)-5-[(5-phospho-beta-D-ribosylamino)methylideneamino]imidazole-4-carboxamide. It participates in amino-acid biosynthesis; L-histidine biosynthesis; L-histidine from 5-phospho-alpha-D-ribose 1-diphosphate: step 3/9. In terms of biological role, catalyzes the hydrolysis of the adenine ring of phosphoribosyl-AMP. This chain is Phosphoribosyl-AMP cyclohydrolase, found in Azotobacter vinelandii (strain DJ / ATCC BAA-1303).